The following is a 103-amino-acid chain: Acylphosphatase-2 (103 aa).

At serine 2 the chain carries N-acetylserine. Residues 13–103 (SVDYEVFGRV…LDFSGFSTRY (91 aa)) enclose the Acylphosphatase-like domain. Residues arginine 28 and asparagine 46 contribute to the active site.

This sequence belongs to the acylphosphatase family.

The enzyme catalyses an acyl phosphate + H2O = a carboxylate + phosphate + H(+). Functionally, its physiological role is not yet clear. The polypeptide is Acylphosphatase-2 (ACYP2) (Gallus gallus (Chicken)).